The chain runs to 374 residues: 2-oxoglutarate-Fe(II) type oxidoreductase ppzC (374 aa).

The tract at residues 111–131 (KKGPFDSGYRGPGTQRVNPDE) is disordered. Positions 220–330 (YPDASLEINF…RVSMPFFWGF (111 aa)) constitute a Fe2OG dioxygenase domain. Fe cation contacts are provided by histidine 254, aspartate 256, and histidine 311. Arginine 321 serves as a coordination point for 2-oxoglutarate.

It belongs to the iron/ascorbate-dependent oxidoreductase family. It depends on Fe(2+) as a cofactor.

The catalysed reaction is peramine + 2-oxoglutarate + O2 = 8-hydroxyperamine + succinate + CO2. It participates in secondary metabolite biosynthesis. In terms of biological role, 2-oxoglutarate-Fe(II) type oxidoreductase; part of the gene cluster that mediates the biosynthesis of pyrrolopyrazines, secondary metabolites showing insecticidal activity. Within the pathway, ppzC uses peramine as substrate for hydroxylation to yield the novel analog 8-hydroxyperamine. The single multifunctional NRPS ppzA is sufficient to produce peramine via condensation of 1-pyrroline-5-carboxylate and arginine, N-methylation of the alpha-amino group of arginine and reduction of the thioester and the cyclization to form an iminium ion resulting in release from the peptide synthetase. Deprotonation of this intermediate and oxidation of the pyrroline ring would give rise to peramine. In Epichloe species that produce only peramine, the peramine synthetase gene is not localized in a gene cluster, in contrast to Metarhizium species that contain additional pyrrolopyrazine biosynthesis genes. The 2-oxoglutarate-Fe(II) type oxidoreductase ppzC hydroxylates peramine to yield the newly identified compound 8-hydroxyperamine whereas ppzD converts L-proline into trans-4-hydroxy-L-proline, a precursor of peramine biosynthesis. This is 2-oxoglutarate-Fe(II) type oxidoreductase ppzC (ppzC) from Metarhizium majus (strain ARSEF 297).